A 415-amino-acid polypeptide reads, in one-letter code: S-inosyl-L-homocysteine hydrolase (415 aa).

Substrate-binding residues include Asp123 and Glu148. Position 149–151 (149–151 (TTT)) interacts with NAD(+). Positions 178 and 182 each coordinate substrate. Residues Asn183, 212–217 (GYGWCG), Glu235, 291–293 (AGH), and Asn337 contribute to the NAD(+) site.

The protein belongs to the adenosylhomocysteinase family. The cofactor is NAD(+).

It localises to the cytoplasm. The catalysed reaction is S-inosyl-L-homocysteine + H2O = L-homocysteine + inosine. It functions in the pathway amino-acid biosynthesis; S-adenosyl-L-methionine biosynthesis. In terms of biological role, catalyzes the hydrolysis of S-inosyl-L-homocysteine (SIH) to L-homocysteine (Hcy) and inosine. Likely functions in a S-adenosyl-L-methionine (SAM) recycling pathway from S-adenosyl-L-homocysteine (SAH) produced from SAM-dependent methylation reactions. Can also catalyze the reverse reaction in vitro, i.e. the synthesis of SIH from Hcy and inosine. In Methanococcus maripaludis (strain DSM 14266 / JCM 13030 / NBRC 101832 / S2 / LL), this protein is S-inosyl-L-homocysteine hydrolase.